A 914-amino-acid chain; its full sequence is NADH-quinone oxidoreductase subunit G (914 aa).

Positions 1-83 (MATIHVDGKE…GTFISIDDSE (83 aa)) constitute a 2Fe-2S ferredoxin-type domain. Cys-34, Cys-45, Cys-48, and Cys-67 together coordinate [2Fe-2S] cluster. One can recognise a 4Fe-4S His(Cys)3-ligated-type domain in the interval 83 to 122 (EAKAFRESVVEWLMTNHPHDCPVCEEGGNCHLQDMTVMTG). The [4Fe-4S] cluster site is built by His-99, Cys-103, Cys-106, Cys-112, Cys-151, Cys-154, Cys-157, Cys-201, Cys-228, Cys-231, Cys-235, and Cys-263. Positions 221–277 (MQFAPSICQQCSVGCNTSPGERYGELRRIENRYNGSVNHYFMCDRGRFGYGYVNLKD) constitute a 4Fe-4S Mo/W bis-MGD-type domain.

It belongs to the complex I 75 kDa subunit family. As to quaternary structure, composed of 13 different subunits. Subunits NuoCD, E, F, and G constitute the peripheral sector of the complex. It depends on [2Fe-2S] cluster as a cofactor. Requires [4Fe-4S] cluster as cofactor.

It catalyses the reaction a quinone + NADH + 5 H(+)(in) = a quinol + NAD(+) + 4 H(+)(out). Functionally, NDH-1 shuttles electrons from NADH, via FMN and iron-sulfur (Fe-S) centers, to quinones in the respiratory chain. The immediate electron acceptor for the enzyme in this species is believed to be ubiquinone. Couples the redox reaction to proton translocation (for every two electrons transferred, four hydrogen ions are translocated across the cytoplasmic membrane), and thus conserves the redox energy in a proton gradient. In Yersinia pestis, this protein is NADH-quinone oxidoreductase subunit G (nuoG).